Consider the following 113-residue polypeptide: Hydrogenase maturation factor HypA (113 aa).

Position 2 (His-2) interacts with Ni(2+). Cys-73, Cys-76, Cys-89, and Cys-92 together coordinate Zn(2+).

It belongs to the HypA/HybF family.

Its function is as follows. Involved in the maturation of [NiFe] hydrogenases. Required for nickel insertion into the metal center of the hydrogenase. This is Hydrogenase maturation factor HypA from Azotobacter vinelandii.